A 357-amino-acid chain; its full sequence is Eugenol O-methyltransferase (357 aa).

5 residues coordinate S-adenosyl-L-methionine: G203, D226, D246, M247, and K260. Residue H264 is the Proton acceptor of the active site.

It belongs to the class I-like SAM-binding methyltransferase superfamily. Cation-independent O-methyltransferase family. COMT subfamily. Specifically expressed in the peltate glandular trichomes on the surface of the young basil leaves.

The enzyme catalyses (E)-isoeugenol + S-adenosyl-L-methionine = (E)-isomethyleugenol + S-adenosyl-L-homocysteine + H(+). The protein operates within aromatic compound metabolism; phenylpropanoid biosynthesis. Its function is as follows. Phenylpropene O-methyltransferase that catalyzes the methylation of the para-4-hydroxyl of eugenol to methyleugenol. Can also convert chavicol to methylchavicol but with less affinity. This is Eugenol O-methyltransferase (EOMT1) from Ocimum basilicum (Sweet basil).